A 179-amino-acid polypeptide reads, in one-letter code: Isopentenyl-diphosphate Delta-isomerase (179 aa).

Residues His-25 and His-31 each contribute to the Mn(2+) site. One can recognise a Nudix hydrolase domain in the interval 29–161; sequence ELHRAITVYI…PEQFTAWFQL (133 aa). The active site involves Cys-66. Cys-66 is a binding site for Mg(2+). Residue His-68 coordinates Mn(2+). Position 86 (Glu-86) interacts with Mg(2+). Glu-111 and Glu-113 together coordinate Mn(2+). Glu-113 is a catalytic residue.

The protein belongs to the IPP isomerase type 1 family. As to quaternary structure, homodimer. Requires Mg(2+) as cofactor. It depends on Mn(2+) as a cofactor.

The protein resides in the cytoplasm. It carries out the reaction isopentenyl diphosphate = dimethylallyl diphosphate. The protein operates within isoprenoid biosynthesis; dimethylallyl diphosphate biosynthesis; dimethylallyl diphosphate from isopentenyl diphosphate: step 1/1. In terms of biological role, catalyzes the 1,3-allylic rearrangement of the homoallylic substrate isopentenyl (IPP) to its highly electrophilic allylic isomer, dimethylallyl diphosphate (DMAPP). In Pectobacterium atrosepticum (strain SCRI 1043 / ATCC BAA-672) (Erwinia carotovora subsp. atroseptica), this protein is Isopentenyl-diphosphate Delta-isomerase.